The primary structure comprises 326 residues: Probable protein phosphatase 2C 61 (326 aa).

A PPM-type phosphatase domain is found at 42 to 316 (LGSVSSLAGG…DDISVVCLSL (275 aa)). Mn(2+) is bound by residues aspartate 77, glycine 78, aspartate 261, and aspartate 307.

The protein belongs to the PP2C family. Requires Mg(2+) as cofactor. The cofactor is Mn(2+).

It catalyses the reaction O-phospho-L-seryl-[protein] + H2O = L-seryl-[protein] + phosphate. The catalysed reaction is O-phospho-L-threonyl-[protein] + H2O = L-threonyl-[protein] + phosphate. In Arabidopsis thaliana (Mouse-ear cress), this protein is Probable protein phosphatase 2C 61.